We begin with the raw amino-acid sequence, 488 residues long: DNA polymerase processivity factor (488 aa).

Disordered stretches follow at residues 1-26 (MTDS…GQPE), 331-453 (SPSA…RSGS), and 469-488 (PGAF…FGFP). Over residues 331-344 (SPSAGSSASRASGS) the composition is skewed to low complexity. Residues 345–355 (EPTDSQDSASD) show a composition bias toward polar residues. Residues 368-379 (AARAGEAGALHA) are compositionally biased toward low complexity. A compositionally biased stretch (polar residues) spans 383–393 (PSSTTRVTPTT). Positions 394-413 (KRGRSGGEDARADTALKKPK) match the Bipartite nuclear localization signal motif. Over residues 398–409 (SGGEDARADTAL) the composition is skewed to basic and acidic residues. The segment covering 437–453 (ADGTAARPAAPDARSGS) has biased composition (low complexity).

This sequence belongs to the herpesviridae DNA polymerase processivity factor family. In terms of assembly, interacts with the DNA polymerase catalytic subunit UL30. Interacts with the origin-binding protein.

It is found in the host nucleus. Its function is as follows. Plays an essential role in viral DNA replication by acting as the polymerase accessory subunit. Associates with the viral polymerase to increase its processivity and forms high-affinity direct interactions with DNA. Facilitates the origin-binding protein UL9 loading onto DNA thus increasing its ability to assemble into a functional complex capable of unwinding duplex DNA. This is DNA polymerase processivity factor from Homo sapiens (Human).